The sequence spans 357 residues: tRNA N6-adenosine threonylcarbamoyltransferase (357 aa).

Fe cation is bound by residues histidine 119 and histidine 123. Substrate is bound by residues 141–145 (LISGG), aspartate 174, glycine 187, and asparagine 284. A Fe cation-binding site is contributed by aspartate 312.

The protein belongs to the KAE1 / TsaD family. Requires Fe(2+) as cofactor.

It is found in the cytoplasm. It carries out the reaction L-threonylcarbamoyladenylate + adenosine(37) in tRNA = N(6)-L-threonylcarbamoyladenosine(37) in tRNA + AMP + H(+). Required for the formation of a threonylcarbamoyl group on adenosine at position 37 (t(6)A37) in tRNAs that read codons beginning with adenine. Is involved in the transfer of the threonylcarbamoyl moiety of threonylcarbamoyl-AMP (TC-AMP) to the N6 group of A37, together with TsaE and TsaB. TsaD likely plays a direct catalytic role in this reaction. This chain is tRNA N6-adenosine threonylcarbamoyltransferase, found in Pelagibacter ubique (strain HTCC1062).